We begin with the raw amino-acid sequence, 86 residues long: Putative membrane protein insertion efficiency factor (86 aa).

Belongs to the UPF0161 family.

The protein localises to the cell inner membrane. In terms of biological role, could be involved in insertion of integral membrane proteins into the membrane. This Pseudomonas aeruginosa (strain LESB58) protein is Putative membrane protein insertion efficiency factor.